A 333-amino-acid chain; its full sequence is uncharacterized protein (333 aa).

The protein to E.coli YfeH.

This is an uncharacterized protein from Pseudomonas aeruginosa (strain ATCC 15692 / DSM 22644 / CIP 104116 / JCM 14847 / LMG 12228 / 1C / PRS 101 / PAO1).